We begin with the raw amino-acid sequence, 61 residues long: Large ribosomal subunit protein uL30 (61 aa).

The protein belongs to the universal ribosomal protein uL30 family. Part of the 50S ribosomal subunit.

This chain is Large ribosomal subunit protein uL30, found in Shewanella halifaxensis (strain HAW-EB4).